The following is a 177-amino-acid chain: Shikimate kinase (177 aa).

17–22 (GVGKTT) is an ATP binding site. Threonine 21 is a Mg(2+) binding site. Residues aspartate 39, arginine 63, and glycine 86 each contribute to the substrate site. Arginine 125 contacts ATP. Residue arginine 143 coordinates substrate. Arginine 159 is an ATP binding site.

It belongs to the shikimate kinase family. Monomer. Mg(2+) is required as a cofactor.

It localises to the cytoplasm. The catalysed reaction is shikimate + ATP = 3-phosphoshikimate + ADP + H(+). Its pathway is metabolic intermediate biosynthesis; chorismate biosynthesis; chorismate from D-erythrose 4-phosphate and phosphoenolpyruvate: step 5/7. Catalyzes the specific phosphorylation of the 3-hydroxyl group of shikimic acid using ATP as a cosubstrate. The sequence is that of Shikimate kinase from Bacillus licheniformis (strain ATCC 14580 / DSM 13 / JCM 2505 / CCUG 7422 / NBRC 12200 / NCIMB 9375 / NCTC 10341 / NRRL NRS-1264 / Gibson 46).